A 290-amino-acid polypeptide reads, in one-letter code: Shikimate dehydrogenase (NADP(+)) (290 aa).

Residues 18–20 (SYS) and threonine 66 contribute to the shikimate site. Lysine 70 functions as the Proton acceptor in the catalytic mechanism. Shikimate-binding residues include asparagine 91 and aspartate 106. NADP(+)-binding positions include 130 to 134 (GNGGA) and methionine 230. Tyrosine 232 is a shikimate binding site. Residue glycine 253 coordinates NADP(+).

This sequence belongs to the shikimate dehydrogenase family. In terms of assembly, homodimer.

The catalysed reaction is shikimate + NADP(+) = 3-dehydroshikimate + NADPH + H(+). It functions in the pathway metabolic intermediate biosynthesis; chorismate biosynthesis; chorismate from D-erythrose 4-phosphate and phosphoenolpyruvate: step 4/7. Involved in the biosynthesis of the chorismate, which leads to the biosynthesis of aromatic amino acids. Catalyzes the reversible NADPH linked reduction of 3-dehydroshikimate (DHSA) to yield shikimate (SA). In Prosthecochloris aestuarii (strain DSM 271 / SK 413), this protein is Shikimate dehydrogenase (NADP(+)).